The sequence spans 599 residues: Aspartate--tRNA(Asp/Asn) ligase (599 aa).

An L-aspartate-binding site is contributed by Glu-173. Residues 197 to 200 (QLFK) are aspartate. Arg-219 is an L-aspartate binding site. ATP contacts are provided by residues 219–221 (RDE) and Gln-228. Residue His-449 participates in L-aspartate binding. ATP is bound at residue Glu-482. Arg-489 is a binding site for L-aspartate. Residue 534 to 537 (GLDR) coordinates ATP.

It belongs to the class-II aminoacyl-tRNA synthetase family. Type 1 subfamily. In terms of assembly, homodimer.

The protein localises to the cytoplasm. The enzyme catalyses tRNA(Asx) + L-aspartate + ATP = L-aspartyl-tRNA(Asx) + AMP + diphosphate. Aspartyl-tRNA synthetase with relaxed tRNA specificity since it is able to aspartylate not only its cognate tRNA(Asp) but also tRNA(Asn). Reaction proceeds in two steps: L-aspartate is first activated by ATP to form Asp-AMP and then transferred to the acceptor end of tRNA(Asp/Asn). The protein is Aspartate--tRNA(Asp/Asn) ligase of Marinobacter nauticus (strain ATCC 700491 / DSM 11845 / VT8) (Marinobacter aquaeolei).